A 391-amino-acid polypeptide reads, in one-letter code: Na(+)/H(+) antiporter NhaA (391 aa).

11 helical membrane passes run 14–34, 59–79, 95–115, 124–144, 154–174, 177–197, 213–233, 261–281, 292–312, 331–351, and 363–383; these read AGGILLMAAVILAMIMANSPL, LIHWINDGLMALFFMLIGLEV, SLPTFAAIGGMIFPAAIYLIF, VGWAIPAATDIAFALGIMALL, VFLLALAIIDDLGVVVIIAMF, TDLSAISLVVAALAIVILVGL, LILWIAVLKSGVHATLAGVII, FVILPIFAFANAGVDLSGMSL, IALGLLLGKPLGVLLFSFVAV, VAVMCGIGFTMSMFISSLAFI, and LGILTGSIMSAVIGYFWLSKV.

It belongs to the NhaA Na(+)/H(+) (TC 2.A.33) antiporter family.

It is found in the cell inner membrane. It carries out the reaction Na(+)(in) + 2 H(+)(out) = Na(+)(out) + 2 H(+)(in). Its function is as follows. Na(+)/H(+) antiporter that extrudes sodium in exchange for external protons. This is Na(+)/H(+) antiporter NhaA from Shewanella loihica (strain ATCC BAA-1088 / PV-4).